We begin with the raw amino-acid sequence, 516 residues long: Maturase K (516 aa).

This sequence belongs to the intron maturase 2 family. MatK subfamily.

It localises to the plastid. The protein resides in the chloroplast. Its function is as follows. Usually encoded in the trnK tRNA gene intron. Probably assists in splicing its own and other chloroplast group II introns. This is Maturase K from Chara vulgaris (Common stonewort).